A 601-amino-acid polypeptide reads, in one-letter code: Lanthanide-dependent methanol dehydrogenase (601 aa).

A signal peptide spans 1 to 21 (MRAVHLLALGAGLAAASPALA). Cysteine 124 and cysteine 125 are joined by a disulfide. Positions 130, 174, 189, 190, and 191 each coordinate pyrroloquinoline quinone. La(3+) is bound at residue glutamate 192. Cysteine 197 and cysteine 256 form a disulfide bridge. Pyrroloquinoline quinone is bound at residue tryptophan 258. Asparagine 276, aspartate 318, and aspartate 320 together coordinate La(3+). Aspartate 318 (proton acceptor) is an active-site residue. Arginine 345 contributes to the pyrroloquinoline quinone binding site. A disulfide bond links cysteine 408 and cysteine 437. 2 residues coordinate pyrroloquinoline quinone: tryptophan 494 and tryptophan 558.

The protein belongs to the bacterial PQQ dehydrogenase family. Homodimer. It depends on La(3+) as a cofactor. Nd(3+) serves as cofactor. Pyrroloquinoline quinone is required as a cofactor.

The protein resides in the periplasm. It carries out the reaction 2 Fe(III)-[cytochrome cL] + methanol = 2 Fe(II)-[cytochrome cL] + formaldehyde + 2 H(+). Catalyzes the oxidation of methanol to formaldehyde, but only in the presence of lanthanides (Ln). Contributes to methanol metabolism when La(3+) is present in the natural environment of the bacterium, allowing bacterial growth with methanol as carbon and energy source. Thereby is an essential enzyme for Ln-dependent methylotrophy. Uses a specific cytochrome cL (XoxG), encoded by the adjacent gene in the locus, as electron acceptor. Also plays a role in the transcriptional regulation of the mxa and xox1 operons, most likely acting as a lanthanide sensory module. Is also able to oxidize formaldehyde to formate in vitro, but this activity does not occur in vivo. The chain is Lanthanide-dependent methanol dehydrogenase from Methylorubrum extorquens (strain ATCC 14718 / DSM 1338 / JCM 2805 / NCIMB 9133 / AM1) (Methylobacterium extorquens).